Here is a 144-residue protein sequence, read N- to C-terminus: Glutaredoxin-C6 (144 aa).

Residues 39–143 form the Glutaredoxin domain; it reads EAKIRRLISE…PKLVQVGALW (105 aa). Residues Cys59 and Cys62 are joined by a disulfide bond.

The protein belongs to the glutaredoxin family. CC-type subfamily.

The protein localises to the cytoplasm. In terms of biological role, has a glutathione-disulfide oxidoreductase activity in the presence of NADPH and glutathione reductase. Reduces low molecular weight disulfides and proteins. This Arabidopsis thaliana (Mouse-ear cress) protein is Glutaredoxin-C6 (GRXC6).